The sequence spans 917 residues: Probable dipeptidyl-aminopeptidase B (917 aa).

The segment covering 1–16 (MATEKGHGRDDEERVP) has biased composition (basic and acidic residues). Positions 1–21 (MATEKGHGRDDEERVPLTRGS) are disordered. Residues 1–99 (MATEKGHGRD…KPMHKSVKIA (99 aa)) are Cytoplasmic-facing. The helical; Signal-anchor for type II membrane protein transmembrane segment at 100-120 (LWTLLFLSLGGWSLAFVLFIF) threads the bilayer. Residues 121–917 (RSHDTYETPI…RAATWAGLSI (797 aa)) are Vacuolar-facing. N-linked (GlcNAc...) asparagine glycans are attached at residues N135, N351, and N574. S756 functions as the Charge relay system in the catalytic mechanism. N815 carries an N-linked (GlcNAc...) asparagine glycan. Residues D833 and H866 each act as charge relay system in the active site. N902 carries N-linked (GlcNAc...) asparagine glycosylation.

It belongs to the peptidase S9B family.

The protein resides in the vacuole membrane. It catalyses the reaction Release of an N-terminal dipeptide, Xaa-Yaa-|-Zaa-, from a polypeptide, preferentially when Yaa is Pro, provided Zaa is neither Pro nor hydroxyproline.. Its function is as follows. Type IV dipeptidyl-peptidase which removes N-terminal dipeptides sequentially from polypeptides having unsubstituted N-termini provided that the penultimate residue is proline. The polypeptide is Probable dipeptidyl-aminopeptidase B (DAPB) (Ajellomyces capsulatus (strain H88) (Darling's disease fungus)).